The primary structure comprises 512 residues: 2-isopropylmalate synthase (512 aa).

Residues 5–267 (LYIFDTTLRD…DSRVDATQIV (263 aa)) enclose the Pyruvate carboxyltransferase domain. 4 residues coordinate Mn(2+): Asp14, His202, His204, and Asn238. Positions 393 to 512 (KLVSLKVVSE…EEKMNAQAAA (120 aa)) are regulatory domain.

This sequence belongs to the alpha-IPM synthase/homocitrate synthase family. LeuA type 1 subfamily. In terms of assembly, homodimer. Requires Mn(2+) as cofactor.

It localises to the cytoplasm. The catalysed reaction is 3-methyl-2-oxobutanoate + acetyl-CoA + H2O = (2S)-2-isopropylmalate + CoA + H(+). It functions in the pathway amino-acid biosynthesis; L-leucine biosynthesis; L-leucine from 3-methyl-2-oxobutanoate: step 1/4. Functionally, catalyzes the condensation of the acetyl group of acetyl-CoA with 3-methyl-2-oxobutanoate (2-ketoisovalerate) to form 3-carboxy-3-hydroxy-4-methylpentanoate (2-isopropylmalate). In Chromobacterium violaceum (strain ATCC 12472 / DSM 30191 / JCM 1249 / CCUG 213 / NBRC 12614 / NCIMB 9131 / NCTC 9757 / MK), this protein is 2-isopropylmalate synthase.